Consider the following 719-residue polypeptide: Anaphase-promoting complex subunit 4 (719 aa).

The WD repeat unit spans residues Asn-57 to Asp-96.

The APC/C is composed of at least 13 subunits: apc1, apc2, nuc2, apc4, apc5, cut9, apc8, apc10, apc11, hcn1, apc13, apc14 and apc15. Interacts with apc1 and dim1.

Its function is as follows. Component of the anaphase-promoting complex/cyclosome (APC/C), a cell cycle-regulated E3 ubiquitin-protein ligase complex that controls progression through mitosis and the G1 phase of the cell cycle. The APC/C is thought to confer substrate specificity and, in the presence of ubiquitin-conjugating E2 enzymes, it catalyzes the formation of protein-ubiquitin conjugates that are subsequently degraded by the 26S proteasome. Has a role in promoting metaphase to anaphase transition via the ubiquitination of specific mitotic substrates. The sequence is that of Anaphase-promoting complex subunit 4 (cut20) from Schizosaccharomyces pombe (strain 972 / ATCC 24843) (Fission yeast).